The primary structure comprises 497 residues: Aspartyl/glutamyl-tRNA(Asn/Gln) amidotransferase subunit B (497 aa).

It belongs to the GatB/GatE family. GatB subfamily. As to quaternary structure, heterotrimer of A, B and C subunits.

It carries out the reaction L-glutamyl-tRNA(Gln) + L-glutamine + ATP + H2O = L-glutaminyl-tRNA(Gln) + L-glutamate + ADP + phosphate + H(+). The catalysed reaction is L-aspartyl-tRNA(Asn) + L-glutamine + ATP + H2O = L-asparaginyl-tRNA(Asn) + L-glutamate + ADP + phosphate + 2 H(+). Allows the formation of correctly charged Asn-tRNA(Asn) or Gln-tRNA(Gln) through the transamidation of misacylated Asp-tRNA(Asn) or Glu-tRNA(Gln) in organisms which lack either or both of asparaginyl-tRNA or glutaminyl-tRNA synthetases. The reaction takes place in the presence of glutamine and ATP through an activated phospho-Asp-tRNA(Asn) or phospho-Glu-tRNA(Gln). The sequence is that of Aspartyl/glutamyl-tRNA(Asn/Gln) amidotransferase subunit B from Cutibacterium acnes (strain DSM 16379 / KPA171202) (Propionibacterium acnes).